Reading from the N-terminus, the 398-residue chain is S-adenosylmethionine synthase (398 aa).

Residue His16 coordinates ATP. Position 18 (Asp18) interacts with Mg(2+). Residue Glu44 coordinates K(+). Positions 57 and 100 each coordinate L-methionine. The flexible loop stretch occupies residues 100–110 (QSPDIAQGVNE). ATP contacts are provided by residues 175–177 (DAK), 242–243 (RF), Asp251, 257–258 (RK), Ala274, and Lys278. L-methionine is bound at residue Asp251. Residue Lys282 coordinates L-methionine.

Belongs to the AdoMet synthase family. As to quaternary structure, homotetramer; dimer of dimers. The cofactor is Mg(2+). K(+) serves as cofactor.

It is found in the cytoplasm. It catalyses the reaction L-methionine + ATP + H2O = S-adenosyl-L-methionine + phosphate + diphosphate. It participates in amino-acid biosynthesis; S-adenosyl-L-methionine biosynthesis; S-adenosyl-L-methionine from L-methionine: step 1/1. Its function is as follows. Catalyzes the formation of S-adenosylmethionine (AdoMet) from methionine and ATP. The overall synthetic reaction is composed of two sequential steps, AdoMet formation and the subsequent tripolyphosphate hydrolysis which occurs prior to release of AdoMet from the enzyme. The polypeptide is S-adenosylmethionine synthase (Streptococcus agalactiae serotype Ia (strain ATCC 27591 / A909 / CDC SS700)).